A 644-amino-acid chain; its full sequence is Exoribonuclease 2 (644 aa).

An RNB domain is found at 189–516 (REDLTALDFV…NHRLLKAVIK (328 aa)). An S1 motif domain is found at 561–643 (GTRFAAEIVD…ETRGIIARPV (83 aa)).

It belongs to the RNR ribonuclease family. RNase II subfamily.

It is found in the cytoplasm. The enzyme catalyses Exonucleolytic cleavage in the 3'- to 5'-direction to yield nucleoside 5'-phosphates.. Involved in mRNA degradation. Hydrolyzes single-stranded polyribonucleotides processively in the 3' to 5' direction. The sequence is that of Exoribonuclease 2 from Shigella sonnei (strain Ss046).